The chain runs to 64 residues: Large ribosomal subunit protein uL29 (64 aa).

This sequence belongs to the universal ribosomal protein uL29 family.

The sequence is that of Large ribosomal subunit protein uL29 from Levilactobacillus brevis (strain ATCC 367 / BCRC 12310 / CIP 105137 / JCM 1170 / LMG 11437 / NCIMB 947 / NCTC 947) (Lactobacillus brevis).